Reading from the N-terminus, the 221-residue chain is Orotidine 5'-phosphate decarboxylase (221 aa).

Residues Asp-12, Lys-34, Asp-60–Thr-69, Ser-117, Pro-170–Ser-180, Gly-193, and Arg-194 each bind substrate. Lys-62 acts as the Proton donor in catalysis.

This sequence belongs to the OMP decarboxylase family. Type 1 subfamily. Homodimer.

It carries out the reaction orotidine 5'-phosphate + H(+) = UMP + CO2. The protein operates within pyrimidine metabolism; UMP biosynthesis via de novo pathway; UMP from orotate: step 2/2. Functionally, catalyzes the decarboxylation of orotidine 5'-monophosphate (OMP) to uridine 5'-monophosphate (UMP). In Methanosarcina acetivorans (strain ATCC 35395 / DSM 2834 / JCM 12185 / C2A), this protein is Orotidine 5'-phosphate decarboxylase.